The sequence spans 158 residues: Retinoic acid receptor beta (158 aa).

A compositionally biased stretch (low complexity) spans 1–18 (RHSAQSIETQSTSSEELV). Positions 1–24 (RHSAQSIETQSTSSEELVPSPPSP) are disordered. Residues 31 to 106 (YKPCFVCQDK…VGMSKESVRN (76 aa)) constitute a DNA-binding region (nuclear receptor). 2 consecutive NR C4-type zinc fingers follow at residues 34-54 (CFVCQDKSSGYHYGVSACEGC) and 70-94 (CHRDKNCVINKVTRNRCQYCRLQRC). The 30-residue stretch at 129–158 (ELDDLTEKIRKAHQETFPSLCQLGKYTTNS) folds into the NR LBD domain.

Belongs to the nuclear hormone receptor family. NR1 subfamily. As to quaternary structure, heterodimer; with a RXR molecule. Binds DNA preferentially as a RAR/RXR heterodimer.

It is found in the nucleus. Functionally, receptor for retinoic acid. Retinoic acid receptors bind as heterodimers to their target response elements in response to their ligands, all-trans or 9-cis retinoic acid, and regulate gene expression in various biological processes. The RAR/RXR heterodimers bind to the retinoic acid response elements (RARE) composed of tandem 5'-AGGTCA-3' sites known as DR1-DR5. The chain is Retinoic acid receptor beta (RARB) from Notophthalmus viridescens (Eastern newt).